The following is a 249-amino-acid chain: RNA-free ribonuclease P (249 aa).

The disordered stretch occupies residues 226–249 (NENEPEYENRDKSKEGSSGEIEFI). A compositionally biased stretch (basic and acidic residues) spans 232-242 (YENRDKSKEGS).

The protein belongs to the HARP family.

It catalyses the reaction Endonucleolytic cleavage of RNA, removing 5'-extranucleotides from tRNA precursor.. In terms of biological role, RNA-free RNase P that catalyzes the removal of the 5'-leader sequence from pre-tRNA to produce the mature 5'-terminus. In Methanosarcina barkeri (strain Fusaro / DSM 804), this protein is RNA-free ribonuclease P.